A 152-amino-acid polypeptide reads, in one-letter code: Large ribosomal subunit protein bL9 (152 aa).

The protein belongs to the bacterial ribosomal protein bL9 family.

Its function is as follows. Binds to the 23S rRNA. In Streptococcus thermophilus (strain ATCC BAA-491 / LMD-9), this protein is Large ribosomal subunit protein bL9.